Reading from the N-terminus, the 514-residue chain is Mitochondrial-processing peptidase subunit alpha (514 aa).

The N-terminal 55 residues, methionine 1–asparagine 55, are a transit peptide targeting the mitochondrion.

This sequence belongs to the peptidase M16 family. Heterodimer of mppa-1 (alpha) and mppb-1 (beta) subunits, forming the mitochondrial processing protease (MPP) in which mppa-1 is involved in substrate recognition and binding and mppb-1 is the catalytic subunit.

Its subcellular location is the mitochondrion matrix. Functionally, substrate recognition and binding subunit of the essential mitochondrial processing protease (MPP), which cleaves the mitochondrial sequence off newly imported precursors proteins. The polypeptide is Mitochondrial-processing peptidase subunit alpha (Caenorhabditis elegans).